Here is a 274-residue protein sequence, read N- to C-terminus: Large ribosomal subunit protein uL2 (274 aa).

Positions 221-256 are disordered; it reads RGTAMNPVDHPHGGGEGRNFGKHPVTPWGVPTKGYK.

It belongs to the universal ribosomal protein uL2 family. Part of the 50S ribosomal subunit. Forms a bridge to the 30S subunit in the 70S ribosome.

One of the primary rRNA binding proteins. Required for association of the 30S and 50S subunits to form the 70S ribosome, for tRNA binding and peptide bond formation. It has been suggested to have peptidyltransferase activity; this is somewhat controversial. Makes several contacts with the 16S rRNA in the 70S ribosome. The sequence is that of Large ribosomal subunit protein uL2 from Hahella chejuensis (strain KCTC 2396).